A 329-amino-acid chain; its full sequence is Beta-ketoacyl-[acyl-carrier-protein] synthase III (329 aa).

Active-site residues include Cys113 and His255. The interval 256-260 (QANQR) is ACP-binding. Residue Asn285 is part of the active site.

It belongs to the thiolase-like superfamily. FabH family. In terms of assembly, homodimer.

It localises to the cytoplasm. The enzyme catalyses malonyl-[ACP] + acetyl-CoA + H(+) = 3-oxobutanoyl-[ACP] + CO2 + CoA. It participates in lipid metabolism; fatty acid biosynthesis. Functionally, catalyzes the condensation reaction of fatty acid synthesis by the addition to an acyl acceptor of two carbons from malonyl-ACP. Catalyzes the first condensation reaction which initiates fatty acid synthesis and may therefore play a role in governing the total rate of fatty acid production. Possesses both acetoacetyl-ACP synthase and acetyl transacylase activities. Its substrate specificity determines the biosynthesis of branched-chain and/or straight-chain of fatty acids. This Chlorobium chlorochromatii (strain CaD3) protein is Beta-ketoacyl-[acyl-carrier-protein] synthase III.